The sequence spans 529 residues: Peptide chain release factor 3 (529 aa).

Residues 11 to 280 form the tr-type G domain; it reads AKRRTFAIIS…GLVEWAPAPM (270 aa). GTP-binding positions include 20–27, 88–92, and 142–145; these read SHPDAGKT, DTPGH, and NKLD.

It belongs to the TRAFAC class translation factor GTPase superfamily. Classic translation factor GTPase family. PrfC subfamily.

The protein localises to the cytoplasm. Its function is as follows. Increases the formation of ribosomal termination complexes and stimulates activities of RF-1 and RF-2. It binds guanine nucleotides and has strong preference for UGA stop codons. It may interact directly with the ribosome. The stimulation of RF-1 and RF-2 is significantly reduced by GTP and GDP, but not by GMP. This Shigella sonnei (strain Ss046) protein is Peptide chain release factor 3.